Consider the following 608-residue polypeptide: Probable methyltransferase PMT3 (608 aa).

The Cytoplasmic portion of the chain corresponds to Met-1–Arg-12. Residues Val-13–Ser-33 form a helical; Signal-anchor for type II membrane protein membrane-spanning segment. Residues Ser-34 to Glu-608 lie on the Lumenal side of the membrane. The N-linked (GlcNAc...) asparagine glycan is linked to Asn-342.

Belongs to the methyltransferase superfamily.

It localises to the golgi apparatus membrane. This chain is Probable methyltransferase PMT3, found in Arabidopsis thaliana (Mouse-ear cress).